A 375-amino-acid chain; its full sequence is Queuine tRNA-ribosyltransferase (375 aa).

Asp-90 serves as the catalytic Proton acceptor. Substrate contacts are provided by residues 90–94, Asp-144, Gln-193, and Gly-220; that span reads DSGGF. An RNA binding region spans residues 251–257; it reads GVGTPED. Asp-270 serves as the catalytic Nucleophile. An RNA binding; important for wobble base 34 recognition region spans residues 275-279; sequence TRNAR. Residues Cys-308, Cys-310, Cys-313, and His-339 each coordinate Zn(2+).

It belongs to the queuine tRNA-ribosyltransferase family. As to quaternary structure, homodimer. Within each dimer, one monomer is responsible for RNA recognition and catalysis, while the other monomer binds to the replacement base PreQ1. Zn(2+) serves as cofactor.

It carries out the reaction 7-aminomethyl-7-carbaguanine + guanosine(34) in tRNA = 7-aminomethyl-7-carbaguanosine(34) in tRNA + guanine. It participates in tRNA modification; tRNA-queuosine biosynthesis. Functionally, catalyzes the base-exchange of a guanine (G) residue with the queuine precursor 7-aminomethyl-7-deazaguanine (PreQ1) at position 34 (anticodon wobble position) in tRNAs with GU(N) anticodons (tRNA-Asp, -Asn, -His and -Tyr). Catalysis occurs through a double-displacement mechanism. The nucleophile active site attacks the C1' of nucleotide 34 to detach the guanine base from the RNA, forming a covalent enzyme-RNA intermediate. The proton acceptor active site deprotonates the incoming PreQ1, allowing a nucleophilic attack on the C1' of the ribose to form the product. After dissociation, two additional enzymatic reactions on the tRNA convert PreQ1 to queuine (Q), resulting in the hypermodified nucleoside queuosine (7-(((4,5-cis-dihydroxy-2-cyclopenten-1-yl)amino)methyl)-7-deazaguanosine). This chain is Queuine tRNA-ribosyltransferase, found in Janthinobacterium sp. (strain Marseille) (Minibacterium massiliensis).